A 142-amino-acid polypeptide reads, in one-letter code: Large ribosomal subunit protein uL13 (142 aa).

This sequence belongs to the universal ribosomal protein uL13 family. In terms of assembly, part of the 50S ribosomal subunit.

This protein is one of the early assembly proteins of the 50S ribosomal subunit, although it is not seen to bind rRNA by itself. It is important during the early stages of 50S assembly. The chain is Large ribosomal subunit protein uL13 from Citrobacter koseri (strain ATCC BAA-895 / CDC 4225-83 / SGSC4696).